We begin with the raw amino-acid sequence, 213 residues long: Lysozyme g-like protein 2 (213 aa).

Residues 1 to 19 (MVPSVVFWGLIALVGTAKG) form the signal peptide. Disulfide bonds link Cys40–Cys93 and Cys54–Cys62. Residue Glu106 is part of the active site.

The protein belongs to the glycosyl hydrolase 23 family.

The protein resides in the secreted. In terms of biological role, may act as a potent antibacterial protein that may play a role in the innate immunity. This is Lysozyme g-like protein 2 (Lyg2) from Mus musculus (Mouse).